Here is a 327-residue protein sequence, read N- to C-terminus: Biotin synthase (327 aa).

One can recognise a Radical SAM core domain in the interval 42 to 268 (NKVQKASLLS…VMPASTVRLS (227 aa)). The [4Fe-4S] cluster site is built by C57, C61, and C64. Residues C102, C134, C194, and R266 each contribute to the [2Fe-2S] cluster site.

It belongs to the radical SAM superfamily. Biotin synthase family. As to quaternary structure, homodimer. Requires [4Fe-4S] cluster as cofactor. The cofactor is [2Fe-2S] cluster.

It carries out the reaction (4R,5S)-dethiobiotin + (sulfur carrier)-SH + 2 reduced [2Fe-2S]-[ferredoxin] + 2 S-adenosyl-L-methionine = (sulfur carrier)-H + biotin + 2 5'-deoxyadenosine + 2 L-methionine + 2 oxidized [2Fe-2S]-[ferredoxin]. It participates in cofactor biosynthesis; biotin biosynthesis; biotin from 7,8-diaminononanoate: step 2/2. In terms of biological role, catalyzes the conversion of dethiobiotin (DTB) to biotin by the insertion of a sulfur atom into dethiobiotin via a radical-based mechanism. The chain is Biotin synthase from Rhizobium rhizogenes (strain K84 / ATCC BAA-868) (Agrobacterium radiobacter).